A 957-amino-acid chain; its full sequence is Collagen alpha-1(XXI) chain (957 aa).

The signal sequence occupies residues methionine 1–serine 16. The VWFA domain occupies aspartate 37–leucine 211. The Laminin G-like domain maps to glycine 230–proline 412. Disordered stretches follow at residues proline 441 to glutamine 788 and cysteine 820 to isoleucine 935. 8 consecutive Collagen-like domains span residues proline 448–phenylalanine 501, alanine 502–aspartate 543, isoleucine 544–lysine 591, proline 592–proline 642, glutamate 643–glutamine 684, glutamine 685–glutamate 741, histidine 742–lysine 786, and glycine 825–glycine 882. A compositionally biased stretch (low complexity) spans threonine 483–proline 498. Basic and acidic residues predominate over residues methionine 535–lysine 556. 2 stretches are compositionally biased toward low complexity: residues methionine 597–asparagine 616 and proline 633–glutamine 649. A compositionally biased stretch (basic and acidic residues) spans lysine 733 to histidine 744. Over residues glutamine 775–lysine 786 the composition is skewed to low complexity.

Belongs to the fibril-associated collagens with interrupted helices (FACIT) family.

It is found in the secreted. The protein localises to the extracellular space. The protein resides in the extracellular matrix. Its subcellular location is the cytoplasm. This chain is Collagen alpha-1(XXI) chain (col21a1), found in Xenopus laevis (African clawed frog).